A 218-amino-acid chain; its full sequence is Cytidylate kinase (218 aa).

G10–T18 contacts ATP.

It belongs to the cytidylate kinase family. Type 1 subfamily.

Its subcellular location is the cytoplasm. It carries out the reaction CMP + ATP = CDP + ADP. The enzyme catalyses dCMP + ATP = dCDP + ADP. In Fusobacterium nucleatum subsp. nucleatum (strain ATCC 25586 / DSM 15643 / BCRC 10681 / CIP 101130 / JCM 8532 / KCTC 2640 / LMG 13131 / VPI 4355), this protein is Cytidylate kinase.